A 358-amino-acid polypeptide reads, in one-letter code: L-lysine 3-hydroxylase (358 aa).

Residues H178, E180, and H314 each coordinate Fe cation. R328 contacts 2-oxoglutarate.

It belongs to the clavaminate synthase family. Fe(2+) is required as a cofactor.

The enzyme catalyses L-lysine + 2-oxoglutarate + O2 = (3S)-3-hydroxy-L-lysine + succinate + CO2. Alpha-ketoglutarate-dependent dioxygenase that in vitro catalyzes the regio- and stereoselective hydroxylation of L-lysine, leading to (3S)-3-hydroxy-L-lysine. Can also use (5R)-5-hydroxy-L-lysine as substrate, but neither D-lysine nor L-ornithine. The polypeptide is L-lysine 3-hydroxylase (Catenulispora acidiphila (strain DSM 44928 / JCM 14897 / NBRC 102108 / NRRL B-24433 / ID139908)).